Reading from the N-terminus, the 121-residue chain is Large ribosomal subunit protein uL18 (121 aa).

The protein belongs to the universal ribosomal protein uL18 family. As to quaternary structure, part of the 50S ribosomal subunit; part of the 5S rRNA/L5/L18/L25 subcomplex. Contacts the 5S and 23S rRNAs.

Functionally, this is one of the proteins that bind and probably mediate the attachment of the 5S RNA into the large ribosomal subunit, where it forms part of the central protuberance. This is Large ribosomal subunit protein uL18 from Bordetella avium (strain 197N).